The following is a 30-amino-acid chain: Kalata-B17 (30 aa).

The cyclopeptide (Gly-Asn) cross-link spans 1–30 (GIPCAESCVYIPCTITALLGCKCKDQVCYN). 3 cysteine pairs are disulfide-bonded: Cys4/Cys21, Cys8/Cys23, and Cys13/Cys28.

In terms of processing, this is a cyclic peptide.

Probably participates in a plant defense mechanism. This chain is Kalata-B17, found in Oldenlandia affinis.